Consider the following 154-residue polypeptide: Ribonuclease H (154 aa).

In terms of domain architecture, RNase H type-1 spans 1 to 142; it reads MLKQVEIFTD…CDELARRAAG (142 aa). Residues aspartate 10, glutamate 48, aspartate 70, and aspartate 134 each contribute to the Mg(2+) site.

This sequence belongs to the RNase H family. As to quaternary structure, monomer. The cofactor is Mg(2+).

It localises to the cytoplasm. The enzyme catalyses Endonucleolytic cleavage to 5'-phosphomonoester.. In terms of biological role, endonuclease that specifically degrades the RNA of RNA-DNA hybrids. The chain is Ribonuclease H from Edwardsiella ictaluri (strain 93-146).